Here is a 192-residue protein sequence, read N- to C-terminus: Bifunctional protein PyrR (192 aa).

Substrate-binding positions include 49 to 50, arginine 90, 111 to 119, arginine 144, and valine 168; these read SG and DDVLFSGRT. The PRPP-binding motif lies at 107–119; that stretch reads VILVDDVLFSGRT.

It belongs to the purine/pyrimidine phosphoribosyltransferase family. PyrR subfamily.

It catalyses the reaction UMP + diphosphate = 5-phospho-alpha-D-ribose 1-diphosphate + uracil. Regulates the transcription of the pyrimidine nucleotide (pyr) operon in response to exogenous pyrimidines. Functionally, also displays a weak uracil phosphoribosyltransferase activity which is not physiologically significant. This is Bifunctional protein PyrR from Corynebacterium glutamicum (strain ATCC 13032 / DSM 20300 / JCM 1318 / BCRC 11384 / CCUG 27702 / LMG 3730 / NBRC 12168 / NCIMB 10025 / NRRL B-2784 / 534).